The chain runs to 388 residues: Protein RMD5 homolog (388 aa).

Positions 112–144 constitute a LisH domain; that stretch reads DTHIVNQIIANFFYRQGMFDIGDCFVAETGESE. The CTLH domain occupies 150–207; it reads SFVEMYRILEAMKRRDLEPALNWAVSNSDKLKEARSDLEMKLHSLHFLEIARGKNSKE. The RING-Gid-type zinc finger occupies 330 to 374; it reads CPVSKEQSSDDNPPMMMSCGHVLCKQTINKMSKNGSKSSFKCPYC.

Interacts with RANBPM.

It is found in the cytoplasm. The polypeptide is Protein RMD5 homolog (Arabidopsis thaliana (Mouse-ear cress)).